The sequence spans 156 residues: MHCPYCRHPDSRVVDSREAEEGAAIRRRRSCPNCGRRFTTVETAILSVVKRSGVTEPFSREKVIRGVRRACQGREVDDDALNLLAQQVEDAVRAKGSPEVPSHEVGLAILGPLRDLDEVAYLRFASVYRSFTSAEDFEREISEMRAARARAGATAD.

A zinc finger spans residues 3 to 34 (CPYCRHPDSRVVDSREAEEGAAIRRRRSCPNC). In terms of domain architecture, ATP-cone spans 46-136 (LSVVKRSGVT…VYRSFTSAED (91 aa)).

Belongs to the NrdR family. It depends on Zn(2+) as a cofactor.

Negatively regulates transcription of bacterial ribonucleotide reductase nrd genes and operons by binding to NrdR-boxes. In Nocardia farcinica (strain IFM 10152), this protein is Transcriptional repressor NrdR.